The primary structure comprises 95 residues: MTIRPLHDRVVVKRLEAEEKTASGIVLPGAAAEKPDMGEVIAVGAGKIGKDGARRPLDVKVGDKIIFGKYSGQTVKADGEELLVMREEDIFGIVE.

This sequence belongs to the GroES chaperonin family. In terms of assembly, heptamer of 7 subunits arranged in a ring. Interacts with the chaperonin GroEL.

The protein resides in the cytoplasm. Together with the chaperonin GroEL, plays an essential role in assisting protein folding. The GroEL-GroES system forms a nano-cage that allows encapsulation of the non-native substrate proteins and provides a physical environment optimized to promote and accelerate protein folding. GroES binds to the apical surface of the GroEL ring, thereby capping the opening of the GroEL channel. This chain is Co-chaperonin GroES, found in Neisseria meningitidis serogroup C (strain 053442).